Here is a 91-residue protein sequence, read N- to C-terminus: UPF0335 protein BRADO1188 (91 aa).

The protein belongs to the UPF0335 family.

The sequence is that of UPF0335 protein BRADO1188 from Bradyrhizobium sp. (strain ORS 278).